A 246-amino-acid chain; its full sequence is Phosducin (246 aa).

Over residues 1–14 the composition is skewed to acidic residues; sequence MEEAASQSLEEDFE. The segment at 1–70 is disordered; it reads MEEAASQSLE…DKDSKERMSR (70 aa). A Phosducin domain is found at 1–246; that stretch reads MEEAASQSLE…QTNTEDEDIE (246 aa). The segment covering 58–69 has biased composition (basic and acidic residues); sequence SRDDKDSKERMS. A Phosphoserine; by PKA modification is found at serine 73. The segment at 111-246 is thioredoxin fold; the sequence is YGFVYELETG…QTNTEDEDIE (136 aa).

This sequence belongs to the phosducin family. Interacts with CRX. Forms a complex with the beta and gamma subunits of the GTP-binding protein, transducin. In terms of processing, light-induced changes in cyclic nucleotide levels modulate the phosphorylation of this protein by cAMP kinase.

It localises to the cytoplasm. Its subcellular location is the cytosol. The protein localises to the nucleus. The protein resides in the cell projection. It is found in the cilium. It localises to the photoreceptor outer segment. Its subcellular location is the photoreceptor inner segment. Its function is as follows. Inhibits the transcriptional activation activity of the cone-rod homeobox CRX. May participate in the regulation of visual phototransduction or in the integration of photoreceptor metabolism. The protein is Phosducin (Pdc) of Rattus norvegicus (Rat).